Here is a 198-residue protein sequence, read N- to C-terminus: MLIAIVGKPGVGKTSLLQYLKDNYHFSVFYADSFIHEQYQKNNPGYQLIMDHFGKEFVNQTEVDRKKLANYVFSDDKLIEKLSLVTKPLLIAWIKSLKTQFQKKLALIEIAVMLNYWNEYRSLFDYVIKLERDDQLVNLALQQRNSHKKVKDLIKEPNCKIDTIFNNDSIATAALKLIKLLETFLERNKCRCDCCHIQ.

The 89-residue stretch at 2–90 (LIAIVGKPGV…KLSLVTKPLL (89 aa)) folds into the DPCK domain. 10 to 15 (GVGKTS) contacts ATP.

The protein belongs to the CoaE family.

It is found in the cytoplasm. It catalyses the reaction 3'-dephospho-CoA + ATP = ADP + CoA + H(+). It functions in the pathway cofactor biosynthesis; coenzyme A biosynthesis; CoA from (R)-pantothenate: step 5/5. In terms of biological role, catalyzes the phosphorylation of the 3'-hydroxyl group of dephosphocoenzyme A to form coenzyme A. The polypeptide is Dephospho-CoA kinase (Mycoplasma genitalium (strain ATCC 33530 / DSM 19775 / NCTC 10195 / G37) (Mycoplasmoides genitalium)).